The chain runs to 406 residues: 4-hydroxy-3-methylbut-2-en-1-yl diphosphate synthase (ferredoxin) (406 aa).

The [4Fe-4S] cluster site is built by Cys315, Cys318, Cys349, and Glu356.

This sequence belongs to the IspG family. The cofactor is [4Fe-4S] cluster.

It carries out the reaction (2E)-4-hydroxy-3-methylbut-2-enyl diphosphate + 2 oxidized [2Fe-2S]-[ferredoxin] + H2O = 2-C-methyl-D-erythritol 2,4-cyclic diphosphate + 2 reduced [2Fe-2S]-[ferredoxin] + H(+). It functions in the pathway isoprenoid biosynthesis; isopentenyl diphosphate biosynthesis via DXP pathway; isopentenyl diphosphate from 1-deoxy-D-xylulose 5-phosphate: step 5/6. Functionally, converts 2C-methyl-D-erythritol 2,4-cyclodiphosphate (ME-2,4cPP) into 1-hydroxy-2-methyl-2-(E)-butenyl 4-diphosphate. The chain is 4-hydroxy-3-methylbut-2-en-1-yl diphosphate synthase (ferredoxin) from Rippkaea orientalis (strain PCC 8801 / RF-1) (Cyanothece sp. (strain PCC 8801)).